The following is a 398-amino-acid chain: Acetate kinase (398 aa).

Residue asparagine 10 coordinates Mg(2+). Lysine 17 contacts ATP. Arginine 91 contacts substrate. Aspartate 148 serves as the catalytic Proton donor/acceptor. Residues 208–212, 283–285, and 331–335 each bind ATP; these read HLGNG, DCR, and GIGEN. Glutamate 385 serves as a coordination point for Mg(2+).

This sequence belongs to the acetokinase family. In terms of assembly, homodimer. The cofactor is Mg(2+). Mn(2+) is required as a cofactor.

Its subcellular location is the cytoplasm. The enzyme catalyses acetate + ATP = acetyl phosphate + ADP. It participates in metabolic intermediate biosynthesis; acetyl-CoA biosynthesis; acetyl-CoA from acetate: step 1/2. Functionally, catalyzes the formation of acetyl phosphate from acetate and ATP. Can also catalyze the reverse reaction. This Shewanella loihica (strain ATCC BAA-1088 / PV-4) protein is Acetate kinase.